A 180-amino-acid chain; its full sequence is NADH-quinone oxidoreductase subunit I (180 aa).

4Fe-4S ferredoxin-type domains are found at residues leucine 50–serine 80 and lysine 90–aspartate 119. The [4Fe-4S] cluster site is built by cysteine 60, cysteine 63, cysteine 66, cysteine 70, cysteine 99, cysteine 102, cysteine 105, and cysteine 109.

It belongs to the complex I 23 kDa subunit family. NDH-1 is composed of 13 different subunits. Subunits NuoA, H, J, K, L, M, N constitute the membrane sector of the complex. [4Fe-4S] cluster is required as a cofactor.

The protein resides in the cell membrane. It carries out the reaction a quinone + NADH + 5 H(+)(in) = a quinol + NAD(+) + 4 H(+)(out). In terms of biological role, NDH-1 shuttles electrons from NADH, via FMN and iron-sulfur (Fe-S) centers, to quinones in the respiratory chain. The immediate electron acceptor for the enzyme in this species is believed to be ubiquinone. Couples the redox reaction to proton translocation (for every two electrons transferred, four hydrogen ions are translocated across the cytoplasmic membrane), and thus conserves the redox energy in a proton gradient. The chain is NADH-quinone oxidoreductase subunit I from Buchnera aphidicola subsp. Acyrthosiphon pisum (strain APS) (Acyrthosiphon pisum symbiotic bacterium).